Here is a 143-residue protein sequence, read N- to C-terminus: Interferon gamma (143 aa).

Gln-1 carries the post-translational modification Pyrrolidone carboxylic acid. 2 N-linked (GlcNAc...) asparagine glycosylation sites follow: Asn-25 and Asn-97.

It belongs to the type II (or gamma) interferon family. In terms of assembly, homodimer. Interacts with IFNGR1 (via extracellular domain); this interaction promotes IFNGR1 dimerization.

The protein resides in the secreted. Type II interferon produced by immune cells such as T-cells and NK cells that plays crucial roles in antimicrobial, antiviral, and antitumor responses by activating effector immune cells and enhancing antigen presentation. Primarily signals through the JAK-STAT pathway after interaction with its receptor IFNGR1 to affect gene regulation. Upon IFNG binding, IFNGR1 intracellular domain opens out to allow association of downstream signaling components JAK2, JAK1 and STAT1, leading to STAT1 activation, nuclear translocation and transcription of IFNG-regulated genes. Many of the induced genes are transcription factors such as IRF1 that are able to further drive regulation of a next wave of transcription. Plays a role in class I antigen presentation pathway by inducing a replacement of catalytic proteasome subunits with immunoproteasome subunits. In turn, increases the quantity, quality, and repertoire of peptides for class I MHC loading. Increases the efficiency of peptide generation also by inducing the expression of activator PA28 that associates with the proteasome and alters its proteolytic cleavage preference. Up-regulates as well MHC II complexes on the cell surface by promoting expression of several key molecules such as cathepsins B/CTSB, H/CTSH, and L/CTSL. Participates in the regulation of hematopoietic stem cells during development and under homeostatic conditions by affecting their development, quiescence, and differentiation. The polypeptide is Interferon gamma (IFNG) (Pan troglodytes (Chimpanzee)).